We begin with the raw amino-acid sequence, 515 residues long: Bifunctional purine biosynthesis protein PurH (515 aa).

Residues 1–145 enclose the MGS-like domain; sequence MTKRVLISVS…KNHASVTVVV (145 aa).

This sequence belongs to the PurH family.

The enzyme catalyses (6R)-10-formyltetrahydrofolate + 5-amino-1-(5-phospho-beta-D-ribosyl)imidazole-4-carboxamide = 5-formamido-1-(5-phospho-D-ribosyl)imidazole-4-carboxamide + (6S)-5,6,7,8-tetrahydrofolate. The catalysed reaction is IMP + H2O = 5-formamido-1-(5-phospho-D-ribosyl)imidazole-4-carboxamide. The protein operates within purine metabolism; IMP biosynthesis via de novo pathway; 5-formamido-1-(5-phospho-D-ribosyl)imidazole-4-carboxamide from 5-amino-1-(5-phospho-D-ribosyl)imidazole-4-carboxamide (10-formyl THF route): step 1/1. It functions in the pathway purine metabolism; IMP biosynthesis via de novo pathway; IMP from 5-formamido-1-(5-phospho-D-ribosyl)imidazole-4-carboxamide: step 1/1. This Streptococcus pneumoniae serotype 19F (strain G54) protein is Bifunctional purine biosynthesis protein PurH.